The primary structure comprises 487 residues: Cobyric acid synthase (487 aa).

Residues 249-435 (GIDIAIVRLP…IHGIFDEGDF (187 aa)) enclose the GATase cobBQ-type domain. The active-site Nucleophile is Cys-330. The active site involves His-427.

Belongs to the CobB/CobQ family. CobQ subfamily.

It participates in cofactor biosynthesis; adenosylcobalamin biosynthesis. In terms of biological role, catalyzes amidations at positions B, D, E, and G on adenosylcobyrinic A,C-diamide. NH(2) groups are provided by glutamine, and one molecule of ATP is hydrogenolyzed for each amidation. The protein is Cobyric acid synthase of Clostridium perfringens (strain ATCC 13124 / DSM 756 / JCM 1290 / NCIMB 6125 / NCTC 8237 / Type A).